We begin with the raw amino-acid sequence, 378 residues long: uncharacterized protein (378 aa).

The Zn(2+) site is built by Cys-38, His-60, Cys-90, Cys-93, Cys-96, and Cys-104.

The protein belongs to the zinc-containing alcohol dehydrogenase family. Class-III subfamily. It depends on Zn(2+) as a cofactor.

This is an uncharacterized protein from Bacillus subtilis (strain 168).